The primary structure comprises 129 residues: uncharacterized protein (129 aa).

Residues Ile-5 to Thr-25 traverse the membrane as a helical segment.

It localises to the membrane. This is an uncharacterized protein from Mycoplasma pneumoniae (strain ATCC 29342 / M129 / Subtype 1) (Mycoplasmoides pneumoniae).